Reading from the N-terminus, the 300-residue chain is E3 ubiquitin-protein ligase RNF212B (300 aa).

An RING-type zinc finger spans residues 6-40 (CNQCFRKDGAHFFVTSCGHIFCKKCVTLEKCAVCG). A coiled-coil region spans residues 88-124 (LIAFYKHRITKLETAMQETQQALVSQDKELSVLRKEN). Disordered stretches follow at residues 141 to 251 (YQGS…HTRV) and 280 to 300 (PYQQQRQMGLPSGREAWTTSR). Over residues 155–169 (TSPSQSVTPRPSFQH) the composition is skewed to polar residues. Residues 170-183 (SSQVVSRSSSVESV) show a composition bias toward low complexity. The span at 191–200 (GSLGQGGRGL) shows a compositional bias: gly residues. Residues 211-234 (NETPSPASTHSLSYRPSSASSGQG) show a composition bias toward polar residues.

Homodimer. Autoubiquitinated.

It is found in the chromosome. It carries out the reaction S-ubiquitinyl-[E2 ubiquitin-conjugating enzyme]-L-cysteine + [acceptor protein]-L-lysine = [E2 ubiquitin-conjugating enzyme]-L-cysteine + N(6)-ubiquitinyl-[acceptor protein]-L-lysine.. It participates in protein modification; protein ubiquitination. In terms of biological role, ubiquitin E3 ligase that acts as a crucial factor for crossing-over (CO) formation during meiosis. Essential for normal prophase I progression and for ensuring appropriate CO designation in meiosis. Recruits key components of the cross-over machinery either directly ou indirectly, leading to the activation of the MutL-gamma complex. The function of RNF212B in CO designation is dependent on its catalytic activity. This is E3 ubiquitin-protein ligase RNF212B (RNF212B) from Pongo abelii (Sumatran orangutan).